The primary structure comprises 241 residues: 3-deoxy-manno-octulosonate cytidylyltransferase (241 aa).

Belongs to the KdsB family.

The protein localises to the cytoplasm. The enzyme catalyses 3-deoxy-alpha-D-manno-oct-2-ulosonate + CTP = CMP-3-deoxy-beta-D-manno-octulosonate + diphosphate. Its pathway is nucleotide-sugar biosynthesis; CMP-3-deoxy-D-manno-octulosonate biosynthesis; CMP-3-deoxy-D-manno-octulosonate from 3-deoxy-D-manno-octulosonate and CTP: step 1/1. It functions in the pathway bacterial outer membrane biogenesis; lipopolysaccharide biosynthesis. Functionally, activates KDO (a required 8-carbon sugar) for incorporation into bacterial lipopolysaccharide in Gram-negative bacteria. This chain is 3-deoxy-manno-octulosonate cytidylyltransferase, found in Rickettsia typhi (strain ATCC VR-144 / Wilmington).